Here is a 165-residue protein sequence, read N- to C-terminus: Iron sulfur cluster assembly protein 1, mitochondrial (165 aa).

The N-terminal 27 residues, 1–27 (MLPVITRFARPALMAIRPVNAMGVLRA), are a transit peptide targeting the mitochondrion. The SSQ1 binding region stretch occupies residues 132-136 (LPPVK).

It belongs to the NifU family. As to quaternary structure, homodimer, but can exist as monomers or trimers. Oligomerization may be regulated by Zn(2+) availability. Component of the core Fe-S cluster (ISC) assembly machinery. Interacts with YFH1/frataxin with a 1 to 1 stoichiometry; the interaction is direct. Interacts with the mitochondrial co-chaperones JAC1 and SSQ1. Interacts with NFS1. Interacts with YAH1/ferredoxin; interacts with the reduced form. It depends on [2Fe-2S] cluster as a cofactor. Zn(2+) serves as cofactor.

The protein localises to the mitochondrion matrix. The protein operates within cofactor biosynthesis; iron-sulfur cluster biosynthesis. Scaffold protein for the de novo synthesis of iron-sulfur (Fe-S) clusters within mitochondria, which is required for maturation of both mitochondrial and cytoplasmic [2Fe-2S] and [4Fe-4S] proteins. First, a [2Fe-2S] cluster is transiently assembled on the scaffold proteins ISU1 and ISU2. In a second step, the cluster is released from ISU1/ISU2, transferred to glutaredoxin GRX5, followed by the formation of mitochondrial [2Fe-2S] proteins, the synthesis of [4Fe-4S] clusters and their target-specific insertion into the recipient apoproteins. Cluster assembly on ISU1/ISU2 depends on the function of the cysteine desulfurase complex NFS1-ISD11, which serves as the sulfur donor for cluster synthesis, the iron-binding protein frataxin (YFH1) as the putative iron donor, and the electron transfer chain comprised of ferredoxin reductase ARH1 and ferredoxin YAH1, which receive their electrons from NADH. Fe-S cluster release from ISU1/ISU2 is achieved by interaction with the Hsp70 chaperone SSQ1, assisted by the DnaJ-like co-chaperone JAC1 and the nucleotide exchange factor MGE1. ISU1 is the major isoform in yeast, while ISU2 is not detectable in cells grown to stationary phase. Also involved in production of a sulfur precursor required for thiolation of cytoplasmic tRNAs. This Saccharomyces cerevisiae (strain ATCC 204508 / S288c) (Baker's yeast) protein is Iron sulfur cluster assembly protein 1, mitochondrial.